Reading from the N-terminus, the 32-residue chain is Cytochrome c3, 10 kDa (32 aa).

The heme site is built by His-16, Cys-25, Cys-28, and His-29.

As to quaternary structure, monomer. In terms of processing, binds 1 heme group per subunit.

It is found in the periplasm. In terms of biological role, participates in sulfate respiration coupled with phosphorylation by transferring electrons from the enzyme dehydrogenase to ferredoxin. This is Cytochrome c3, 10 kDa from Desulfuromonas acetoxidans (Chloropseudomonas ethylica).